A 226-amino-acid chain; its full sequence is UPF0173 metal-dependent hydrolase Minf_0129 (226 aa).

The protein belongs to the UPF0173 family.

The protein is UPF0173 metal-dependent hydrolase Minf_0129 of Methylacidiphilum infernorum (isolate V4) (Methylokorus infernorum (strain V4)).